Reading from the N-terminus, the 177-residue chain is Ribosome maturation factor RimP (177 aa).

The protein belongs to the RimP family.

It localises to the cytoplasm. Functionally, required for maturation of 30S ribosomal subunits. This chain is Ribosome maturation factor RimP, found in Methylibium petroleiphilum (strain ATCC BAA-1232 / LMG 22953 / PM1).